A 164-amino-acid chain; its full sequence is Lipoprotein signal peptidase (164 aa).

3 helical membrane-spanning segments follow: residues 12–32 (WLWLVVVVLIIDLGSKYLILQ), 70–90 (WFFAGIAIGISVILAVMMYRS), and 102–122 (ALIIGGALGNLFDRLWHGFVV). Active-site residues include Asp-123 and Asp-141. Residues 137–157 (FNLADTAICVGAALIVLEGFL) form a helical membrane-spanning segment.

Belongs to the peptidase A8 family.

It localises to the cell inner membrane. It carries out the reaction Release of signal peptides from bacterial membrane prolipoproteins. Hydrolyzes -Xaa-Yaa-Zaa-|-(S,diacylglyceryl)Cys-, in which Xaa is hydrophobic (preferably Leu), and Yaa (Ala or Ser) and Zaa (Gly or Ala) have small, neutral side chains.. Its pathway is protein modification; lipoprotein biosynthesis (signal peptide cleavage). In terms of biological role, this protein specifically catalyzes the removal of signal peptides from prolipoproteins. The protein is Lipoprotein signal peptidase of Shigella sonnei (strain Ss046).